The following is a 248-amino-acid chain: Ribonuclease PH (248 aa).

Phosphate is bound by residues Arg93 and 131–133 (GTR).

This sequence belongs to the RNase PH family. In terms of assembly, homohexameric ring arranged as a trimer of dimers.

The enzyme catalyses tRNA(n+1) + phosphate = tRNA(n) + a ribonucleoside 5'-diphosphate. Functionally, phosphorolytic 3'-5' exoribonuclease that plays an important role in tRNA 3'-end maturation. Removes nucleotide residues following the 3'-CCA terminus of tRNAs; can also add nucleotides to the ends of RNA molecules by using nucleoside diphosphates as substrates, but this may not be physiologically important. Probably plays a role in initiation of 16S rRNA degradation (leading to ribosome degradation) during starvation. In Bifidobacterium longum (strain NCC 2705), this protein is Ribonuclease PH.